We begin with the raw amino-acid sequence, 174 residues long: Peptide methionine sulfoxide reductase MsrA (174 aa).

Cys-11 is an active-site residue.

This sequence belongs to the MsrA Met sulfoxide reductase family.

It catalyses the reaction L-methionyl-[protein] + [thioredoxin]-disulfide + H2O = L-methionyl-(S)-S-oxide-[protein] + [thioredoxin]-dithiol. The enzyme catalyses [thioredoxin]-disulfide + L-methionine + H2O = L-methionine (S)-S-oxide + [thioredoxin]-dithiol. Its function is as follows. Has an important function as a repair enzyme for proteins that have been inactivated by oxidation. Catalyzes the reversible oxidation-reduction of methionine sulfoxide in proteins to methionine. This chain is Peptide methionine sulfoxide reductase MsrA, found in Nitratiruptor sp. (strain SB155-2).